The chain runs to 147 residues: Methylmalonyl-CoA mutase homolog (147 aa).

This sequence to methylmalonyl-CoA mutase.

The chain is Methylmalonyl-CoA mutase homolog from Alkalihalophilus pseudofirmus (strain ATCC BAA-2126 / JCM 17055 / OF4) (Bacillus pseudofirmus).